A 113-amino-acid chain; its full sequence is UPF0482 protein YnfB (113 aa).

The first 28 residues, 1 to 28, serve as a signal peptide directing secretion; the sequence is MKITLSKRIGLLAILLPCALALSTTVHA.

The protein belongs to the UPF0482 family.

The sequence is that of UPF0482 protein YnfB from Escherichia coli O8 (strain IAI1).